The primary structure comprises 2571 residues: MSPIFLGDSEDAATCRCGPPSSPSPELSGTETALTSDSDGPELLNPGPQGPEPIAIIGMGCRLPGGASTPSKLWELLEAGRSAQGRLPADRYNMDAFYHPNGDRPGSMNTSGGYFIQEDVRGFDNSMFGINHLEAMYMDPQQRKLLEVTFEAFEAAGLSLDAVSGANVGCYVGNFVTDFITMQLKDAEYTHRYTATGSGTTILANRISHVFNLKGPSFVIDTACSSSLYSLHAACSALWQRECDAAVVAGANLIQSPEQQLATMKAGVLSGTSTCHTFDASADGYGRADGIGVLLVKRLSDAIRDNDPIRSVIRSTAVNSNGKTNGITLPSADGQEAVIRKAYALAGLGYGDTDYVECHGTGTAVGDPIEVEALSRVFRRQPGSQPLLIGSVKTNLGHSEAASGISSLLKVAMALECGRIPPTIGISSLNPKLKLDEWNMRIVTENTEWPQNRTPNGQQGGRALRRAGVNSFGYGGANAHCILESPDSHVPRGYRERGAATRLTNTTTGAPRTALLLPVSSKSASSLEQKSADIASYVAAKTASSADLQASELAYTLGVRRSHLSSRGFWIAAPDSLSEDVVVGSDAASSKLHTRIPGRAYGRHPLAFVFTGQGAQWAGMGRELMDEFPSFRRTVQMLDSTLQLLPHPPTWTLRGALLEPPESSSINLASRSQPVCTAVQLALVRLLRDWGVAPGFAVGHSSGEIAAAYAAGRLTARQAIAVAYYRGYAVERSTTVGAMMAAGLSQDEADGDIAALGLAGKIRVACVNSPESVTISGDTDGIDEYKAVLDGRGVFARLLKTDGRAYHSHHMAAIGGLYEDLVVEALASPAVQNDLDDAGQQNSSPAQWISSVTGQVVGDDMPTAEPSYWRANLESPVLFAQVVEKLLSPGTPVHLVEIGPHSALEMPIKQTRTKVGIDAAKTPYNSALLRGKNSTTTMLTLAGELFLHGHPIAFGAVNNTTTAHTHSRYPPTKPGMLLSARQPQVLTDLPRHVWEYDGGAGFHEPRSSIEWRNRTHARHDLLGSRVPGGDGITRQWRNVLRAADLAWLVGHKLDTTTVLPAAGYLAMAVEAACQSTGLSLERYGRGSPRCSFALRHVHVEKALMVPDDQQSGIEVFTTLQPTTAPRTATAGSGGWYKFIVSSFVAGESTRHAHGLVKLTQNEDRPPARRLPVEDEAMEQSAPRTWYRRFVQEGLNFSGPLQSLSRIETHRRRGEMHLLAQTSLSPGLGGESAYALHPIAIDALFQSGPIACTRGVVRDFTAKVPVYIKDMELRMPSRSLLSGSFVSPSGDESAEATAQQGSIRTICKSAGLGAISVDSQLFDGDDLVLCVSGCRMVPYSSGTAVGAAAGDGYERHPMLHVAWKPDVERLADAGIEHGASALTAYLSQFQGTTVIGDDADGVAGVLGAAKLAGGVLDLVVHKRPTLHVLLASDSTQDDGAAKHMRELLGVGTAFQRCLSLWKRSTDEDGAVHFQDLSAKEDTTANGTATAASSAPPSIFDVLVILDLDTSTKGSTSADLASYSSLVDEKKGTLIWSGPPSSASTASSGSIPAKLSPLGFSCMEAQQSHGTPVLEVVLAQRGLPDKKQELGQQEVLIVERNPDHKLNSELALHVAELTNKPAKRVTLDQLTPDLATAHATVIATVELEDALLADVKDGDFAQIKTLTDHCTNLIWVTGGGLADGTRPEQAVVFGLSRALMMEQPSLRFFVVGVDGECVAAETTARQVLGVARQALLDDAEPDFEFVQDGRAGGALQVSRFVPDDAMNSTFRQRQPNATETLEMRLGDAHPCRLSLAGPVAANMSDAFVFTRDLTHKNNDHGIGQDEVEVQVLTVGLHARDLRAMTGETSDGDGDTQPHAVTSQYVGRVVRVGSAVEGLGVDDSVLVMAPGRCATVERIPASSCSVLRDGEDPAAMASIPLPACTALYALRDRARLQPGETVLVCYREADAHGRDRSGPAAVHIARALGANVFAVVVVDDGDDEAKQEQRSEIVGDLGLPETHVSFVKVGDGAGFGSDMLSSHGRVQVVANFCTDRWPLSNVAALCADDARIVHVGRGTVLGELVTTDPTILRKNIALSTFDVNLLLTPVPSSPSTTRSGLLLDDVLSLWRQGKLNGLLGTQPRLFDVANLAEAFRALSGSTTKAGHTTPRGAVSVSFEATSLVRVAPPNYHTVFNPDKSYLLVGCLGGLGRSMSRWMLSRGARKFTFLGRSGTDREPAARLVQYLELCGASVTVVRGDVVDASDVERAVAASAAAGPIGGVVQAAMGLDEALFTAMPAAYWRKGLAPKVRGSLNLHAALAGRDADLDFFLMTSSVSGSVGTATESNYCAANYFLDVFARHRRGLGLPATSVGLGMISEVGYLHENPEIEAMLLRKGIQAISEDEMLNMIDISLSASSSSRTRGSPAAAWRGTDHALAHTLTGLEPIGVRELRAQGFDVSSPVLGDPRASLLAAALAADENESAGAGAGGASTSSGGLPAGLAQAVAGGSAGAVAAQALELVADKFSNLVLVPRDRLDLLRPLSDVGVDSMLAAEFRGWIYQQLKVNVPYLTMLASTTTLTMLSELIAGKLLEA.

A disordered region spans residues 1–51; it reads MSPIFLGDSEDAATCRCGPPSSPSPELSGTETALTSDSDGPELLNPGPQGP. Residues 27-38 are compositionally biased toward polar residues; sequence LSGTETALTSDS. A Ketosynthase family 3 (KS3) domain is found at 51-485; sequence PEPIAIIGMG…GANAHCILES (435 aa). Residues C224, H359, and H398 each act as for beta-ketoacyl synthase activity in the active site. Positions 609–932 are malonyl-CoA:ACP transacylase (MAT) domain; that stretch reads VFTGQGAQWA…PYNSALLRGK (324 aa). The For malonyltransferase activity role is filled by S701. The N-terminal hotdog fold stretch occupies residues 1019-1163; it reads HDLLGSRVPG…GLVKLTQNED (145 aa). Residues 1019–1340 form a dehydratase (DH) domain region; the sequence is HDLLGSRVPG…SGCRMVPYSS (322 aa). Positions 1019–1344 constitute a PKS/mFAS DH domain; that stretch reads HDLLGSRVPG…MVPYSSGTAV (326 aa). The Proton acceptor; for dehydratase activity role is filled by H1051. The C-terminal hotdog fold stretch occupies residues 1177-1344; the sequence is MEQSAPRTWY…MVPYSSGTAV (168 aa). The Proton donor; for dehydratase activity role is filled by D1241. An enoyl reductase (ER) domain region spans residues 1800 to 2140; it reads NMSDAFVFTR…AFRALSGSTT (341 aa). Residues 2177–2355 form a ketoreductase (KR) domain region; sequence SYLLVGCLGG…ATSVGLGMIS (179 aa). Residues 2490 to 2568 enclose the Carrier domain; that stretch reads AVAAQALELV…MLSELIAGKL (79 aa). S2527 carries the O-(pantetheine 4'-phosphoryl)serine modification.

It participates in polyketide biosynthesis. Its function is as follows. Highly reducing polyketide synthase; part of the gene cluster that mediates the biosynthesis of pyriculol and pyriculariol, two heptaketides that induce lesion formation upon application on rice leaves but are dispensable for pathogenicity. The highly reducing polyketide synthase synthesizes the heptaketide backbone of pyriculol and pyriculariol. Pyriculol and pyriculariol contain several hydroxyl moieties and double bonds, so it can be assumed that several reduction steps occur during biosynthesis. These reactions could be executed by PKS19 itself or partly by the tailoring enzymes OXR1, PXR2, RED1, RED2 or RED3, identified within the cluster. The FAD-linked oxidoreductase OXR1 is the only tailoring enzyme for which the function has been determined yet, and is involved in the oxidation of dihydropyriculol and dihydropyriculariol into pyriculol and pyriculariol, respectively. This Pyricularia oryzae (strain 70-15 / ATCC MYA-4617 / FGSC 8958) (Rice blast fungus) protein is Highly reducing polyketide synthase 19.